The chain runs to 1225 residues: DNA-directed RNA polymerase subunit beta' (1225 aa).

Zn(2+) contacts are provided by cysteine 60, cysteine 62, cysteine 75, and cysteine 78. Residues aspartate 450, aspartate 452, and aspartate 454 each coordinate Mg(2+). Residues cysteine 818, cysteine 892, cysteine 899, and cysteine 902 each contribute to the Zn(2+) site.

The protein belongs to the RNA polymerase beta' chain family. The RNAP catalytic core consists of 2 alpha, 1 beta, 1 beta' and 1 omega subunit. When a sigma factor is associated with the core the holoenzyme is formed, which can initiate transcription. The cofactor is Mg(2+). Requires Zn(2+) as cofactor.

It catalyses the reaction RNA(n) + a ribonucleoside 5'-triphosphate = RNA(n+1) + diphosphate. In terms of biological role, DNA-dependent RNA polymerase catalyzes the transcription of DNA into RNA using the four ribonucleoside triphosphates as substrates. This is DNA-directed RNA polymerase subunit beta' from Streptococcus pneumoniae serotype 19F (strain G54).